A 318-amino-acid polypeptide reads, in one-letter code: ATP-dependent (S)-NAD(P)H-hydrate dehydratase (318 aa).

The YjeF C-terminal domain occupies 3–313; sequence AREVFKRVIP…KEIGPAFDSL (311 aa). Residues Gly119 and 172-178 contribute to the (6S)-NADPHX site; that span reads NTNEFKR. ATP-binding positions include 210 to 214 and 229 to 238; these read KGSKD and TSLRRCGGQG. Asp239 contributes to the (6S)-NADPHX binding site.

The protein belongs to the NnrD/CARKD family. Mg(2+) is required as a cofactor.

It localises to the cytoplasm. The enzyme catalyses (6S)-NADHX + ATP = ADP + phosphate + NADH + H(+). It carries out the reaction (6S)-NADPHX + ATP = ADP + phosphate + NADPH + H(+). Functionally, catalyzes the dehydration of the S-form of NAD(P)HX at the expense of ATP, which is converted to ADP. Together with NAD(P)HX epimerase, which catalyzes the epimerization of the S- and R-forms, the enzyme allows the repair of both epimers of NAD(P)HX, a damaged form of NAD(P)H that is a result of enzymatic or heat-dependent hydration. This Batrachochytrium dendrobatidis (strain JAM81 / FGSC 10211) (Frog chytrid fungus) protein is ATP-dependent (S)-NAD(P)H-hydrate dehydratase.